A 1832-amino-acid polypeptide reads, in one-letter code: Multifunctional protein pyr-3 (1832 aa).

The segment at Ala-2–Phe-400 is GATase (Glutamine amidotransferase). Residues Ser-64, Gly-273, and Gly-275 each coordinate L-glutamine. One can recognise a Glutamine amidotransferase type-1 domain in the interval Arg-228–Asp-413. The active-site Nucleophile; for GATase activity is Cys-302. Positions 303, 306, 344, 346, and 347 each coordinate L-glutamine. Residues His-386 and Glu-388 each act as for GATase activity in the active site. The segment at Asp-401 to Lys-442 is linker. The interval Val-443 to Arg-983 is CPSase A. The segment at Val-443–Val-1484 is CPSase (Carbamoyl phosphate synthase). 12 residues coordinate ATP: Arg-560, Arg-600, Gly-606, Gly-607, Arg-637, Met-639, Glu-644, Gly-670, Ile-671, His-672, Gln-713, and Glu-727. ATP-grasp domains follow at residues Ala-564 to Leu-756 and Ser-1102 to Met-1293. Residues Gln-713, Glu-727, and Asn-729 each coordinate Mg(2+). Residues Gln-713, Glu-727, and Asn-729 each coordinate Mn(2+). The segment at Gly-984 to Val-1484 is CPSase B. The ATP site is built by Arg-1138, Lys-1177, Ile-1179, Glu-1184, Gly-1209, Val-1210, His-1211, Ser-1212, Gln-1252, and Glu-1264. The Mg(2+) site is built by Gln-1252, Glu-1264, and Asn-1266. The Mn(2+) site is built by Gln-1252, Glu-1264, and Asn-1266. The MGS-like domain maps to Phe-1359–Leu-1507. Positions Glu-1485–Lys-1528 are linker. Positions Lys-1529 to Gly-1832 are ATCase (Aspartate transcarbamylase). Carbamoyl phosphate contacts are provided by Arg-1581 and Thr-1582. L-aspartate is bound at residue Lys-1609. The carbamoyl phosphate site is built by Arg-1630, His-1658, and Gln-1661. Arg-1691 and Arg-1754 together coordinate L-aspartate. Leu-1793 and Pro-1794 together coordinate carbamoyl phosphate.

In the N-terminal section; belongs to the CarA family. This sequence in the central section; belongs to the CarB family. The protein in the C-terminal section; belongs to the aspartate/ornithine carbamoyltransferase superfamily. ATCase family. It depends on Mg(2+) as a cofactor. The cofactor is Mn(2+).

The protein localises to the cytoplasm. It localises to the nucleus. It catalyses the reaction hydrogencarbonate + L-glutamine + 2 ATP + H2O = carbamoyl phosphate + L-glutamate + 2 ADP + phosphate + 2 H(+). The enzyme catalyses L-glutamine + H2O = L-glutamate + NH4(+). It carries out the reaction hydrogencarbonate + NH4(+) + 2 ATP = carbamoyl phosphate + 2 ADP + phosphate + 2 H(+). The catalysed reaction is carbamoyl phosphate + L-aspartate = N-carbamoyl-L-aspartate + phosphate + H(+). It functions in the pathway pyrimidine metabolism; UMP biosynthesis via de novo pathway; (S)-dihydroorotate from bicarbonate: step 1/3. Its pathway is pyrimidine metabolism; UMP biosynthesis via de novo pathway; (S)-dihydroorotate from bicarbonate: step 2/3. With respect to regulation, both CPSase and ATCase activities are feedback inhibited by the end product UTP. Its function is as follows. Multifunctional protein that encodes the first 2 enzymatic activities of the de novo pyrimidine pathway: carbamoylphosphate synthetase (CPSase; EC 6.3.5.5) and aspartate transcarbamylase (ATCase; EC 2.1.3.2). The CPSase-function is accomplished in 2 steps, by a glutamine-dependent amidotransferase activity (GATase) that binds and cleaves glutamine to produce ammonia, followed by an ammonium-dependent carbamoyl phosphate synthetase, which reacts with the ammonia, hydrogencarbonate and ATP to form carbamoyl phosphate. The endogenously produced carbamoyl phosphate is sequestered and channeled to the ATCase active site. ATCase then catalyzes the formation of carbamoyl-L-aspartate from L-aspartate and carbamoyl phosphate. This is Multifunctional protein pyr-3 (pyr-3) from Neurospora crassa (strain ATCC 24698 / 74-OR23-1A / CBS 708.71 / DSM 1257 / FGSC 987).